Consider the following 221-residue polypeptide: Uracil-DNA glycosylase 1 (221 aa).

Residue aspartate 61 is the Proton acceptor of the active site.

This sequence belongs to the uracil-DNA glycosylase (UDG) superfamily. UNG family.

Its subcellular location is the cytoplasm. It carries out the reaction Hydrolyzes single-stranded DNA or mismatched double-stranded DNA and polynucleotides, releasing free uracil.. Functionally, excises uracil residues from the DNA which can arise as a result of misincorporation of dUMP residues by DNA polymerase or due to deamination of cytosine. The sequence is that of Uracil-DNA glycosylase 1 from Listeria monocytogenes serotype 4b (strain F2365).